The sequence spans 1179 residues: Protein turtle homolog A (1179 aa).

Positions M1–G20 are cleaved as a signal peptide. At R21–P734 the chain is on the extracellular side. Ig-like domains follow at residues P24 to N124, P136 to T216, P226 to T318, P322 to T410, and P418 to Y502. 5 cysteine pairs are disulfide-bonded: C41-C108, C158-C206, C248-C301, C344-C395, and C440-C486. N-linked (GlcNAc...) asparagine glycosylation is found at N188 and N256. 2 Fibronectin type-III domains span residues S507–A611 and P623–L718. N-linked (GlcNAc...) asparagine glycans are attached at residues N513 and N524. A disordered region spans residues L606–P626. The segment covering P613–P626 has biased composition (pro residues). Residues V735 to L755 traverse the membrane as a helical segment. Topologically, residues A756–L1179 are cytoplasmic. Disordered stretches follow at residues R767 to G919, D940 to A988, and A1015 to N1079. Over residues G785–S800 the composition is skewed to low complexity. S809 bears the Phosphoserine mark. Pro residues-rich tracts occupy residues T826–S836 and V906–G919. T972 is subject to Phosphothreonine. The PDZ-binding signature appears at T1177–L1179.

It belongs to the immunoglobulin superfamily. Turtle family. Interacts with MAGI2 and SHANK1.

It localises to the cell membrane. Its subcellular location is the synapse. In terms of biological role, functions in dendrite outgrowth and synapse maturation. In Homo sapiens (Human), this protein is Protein turtle homolog A (IGSF9).